The sequence spans 124 residues: Ribonuclease pancreatic (124 aa).

Residues 1-23 are disordered; that stretch reads RESPAMKFQRQHMDSGNSPGNNP. Residues K7 and R10 each contribute to the substrate site. The Proton acceptor role is filled by H12. Over residues 14–23 the composition is skewed to polar residues; it reads DSGNSPGNNP. Intrachain disulfides connect C26-C84, C40-C95, C58-C110, and C65-C72. Residues 41 to 45 and K66 contribute to the substrate site; that span reads KPVNT. An N-linked (GlcNAc...) asparagine; partial glycan is attached at N76. Substrate is bound at residue R85. H119 (proton donor) is an active-site residue.

Belongs to the pancreatic ribonuclease family. As to quaternary structure, monomer. Interacts with and forms tight 1:1 complexes with RNH1. Dimerization of two such complexes may occur. Interaction with RNH1 inhibits this protein. Pancreas.

It is found in the secreted. The catalysed reaction is an [RNA] containing cytidine + H2O = an [RNA]-3'-cytidine-3'-phosphate + a 5'-hydroxy-ribonucleotide-3'-[RNA].. It carries out the reaction an [RNA] containing uridine + H2O = an [RNA]-3'-uridine-3'-phosphate + a 5'-hydroxy-ribonucleotide-3'-[RNA].. Its function is as follows. Endonuclease that catalyzes the cleavage of RNA on the 3' side of pyrimidine nucleotides. Acts on single-stranded and double-stranded RNA. The sequence is that of Ribonuclease pancreatic (RNASE1) from Balaenoptera acutorostrata (Common minke whale).